A 206-amino-acid chain; its full sequence is Large ribosomal subunit protein uL4 (206 aa).

Residues 63-93 (MYKQKGTGRARHHSARAPQFRGGGKAHGPVV) form a disordered region. The segment covering 64–77 (YKQKGTGRARHHSA) has biased composition (basic residues).

The protein belongs to the universal ribosomal protein uL4 family. As to quaternary structure, part of the 50S ribosomal subunit.

One of the primary rRNA binding proteins, this protein initially binds near the 5'-end of the 23S rRNA. It is important during the early stages of 50S assembly. It makes multiple contacts with different domains of the 23S rRNA in the assembled 50S subunit and ribosome. Its function is as follows. Forms part of the polypeptide exit tunnel. This chain is Large ribosomal subunit protein uL4, found in Rhizobium meliloti (strain 1021) (Ensifer meliloti).